The sequence spans 409 residues: Elongation factor Tu, chloroplastic (409 aa).

A tr-type G domain is found at 10–214 (KPHVNIGTIG…AVDEYIPTPE (205 aa)). The G1 stretch occupies residues 19 to 26 (GHVDHGKT). 19–26 (GHVDHGKT) contacts GTP. T26 provides a ligand contact to Mg(2+). The segment at 60-64 (GITIN) is G2. A G3 region spans residues 81-84 (DCPG). GTP contacts are provided by residues 81–85 (DCPGH) and 136–139 (NKED). The G4 stretch occupies residues 136-139 (NKED). Positions 174-176 (SAL) are G5.

It belongs to the TRAFAC class translation factor GTPase superfamily. Classic translation factor GTPase family. EF-Tu/EF-1A subfamily.

The protein resides in the plastid. It is found in the chloroplast. The catalysed reaction is GTP + H2O = GDP + phosphate + H(+). In terms of biological role, GTP hydrolase that promotes the GTP-dependent binding of aminoacyl-tRNA to the A-site of ribosomes during protein biosynthesis. The sequence is that of Elongation factor Tu, chloroplastic (tufA) from Trieres chinensis (Marine centric diatom).